The following is a 247-amino-acid chain: Carboxy-S-adenosyl-L-methionine synthase (247 aa).

Residues tyrosine 39, 64–66 (GCS), 89–90 (DN), 117–118 (DI), asparagine 132, and arginine 199 each bind S-adenosyl-L-methionine.

It belongs to the class I-like SAM-binding methyltransferase superfamily. Cx-SAM synthase family. As to quaternary structure, homodimer.

It catalyses the reaction prephenate + S-adenosyl-L-methionine = carboxy-S-adenosyl-L-methionine + 3-phenylpyruvate + H2O. In terms of biological role, catalyzes the conversion of S-adenosyl-L-methionine (SAM) to carboxy-S-adenosyl-L-methionine (Cx-SAM). The sequence is that of Carboxy-S-adenosyl-L-methionine synthase from Salmonella paratyphi B (strain ATCC BAA-1250 / SPB7).